The primary structure comprises 163 residues: uncharacterized protein (163 aa).

This is an uncharacterized protein from Drosophila melanogaster (Fruit fly).